A 364-amino-acid chain; its full sequence is tRNA-specific 2-thiouridylase MnmA 1 (364 aa).

ATP is bound by residues 11 to 18 (GMSGGTDS) and Phe37. The active-site Nucleophile is Cys96. Cysteines 96 and 193 form a disulfide. Gly120 contacts ATP. The interaction with tRNA stretch occupies residues 142 to 144 (KDQ). Catalysis depends on Cys193, which acts as the Cysteine persulfide intermediate. The tract at residues 309-310 (RY) is interaction with tRNA.

The protein belongs to the MnmA/TRMU family.

The protein resides in the cytoplasm. The catalysed reaction is S-sulfanyl-L-cysteinyl-[protein] + uridine(34) in tRNA + AH2 + ATP = 2-thiouridine(34) in tRNA + L-cysteinyl-[protein] + A + AMP + diphosphate + H(+). Functionally, catalyzes the 2-thiolation of uridine at the wobble position (U34) of tRNA, leading to the formation of s(2)U34. This is tRNA-specific 2-thiouridylase MnmA 1 from Bacteroides fragilis (strain YCH46).